The sequence spans 261 residues: Chanoclavine-I dehydrogenase ifgE (261 aa).

Positions 1 to 20 (MASVKSRVFAITGGASGIGA) are cleaved as a signal peptide. Residues Ile-18, Lys-48, Asp-66, Arg-132, Tyr-166, Lys-170, and Thr-201 each coordinate NADP(+). The active-site Proton acceptor is Tyr-166. Residue Lys-170 is the Lowers pKa of active site Tyr of the active site.

This sequence belongs to the short-chain dehydrogenases/reductases (SDR) family.

The protein operates within alkaloid biosynthesis; ergot alkaloid biosynthesis. In terms of biological role, chanoclavine-I dehydrogenase; part of the gene cluster that mediates the biosynthesis of isofumigaclavines, fungal ergot alkaloids. The tryptophan dimethylallyltransferase ifgA catalyzes the first step of ergot alkaloid biosynthesis by condensing dimethylallyl diphosphate (DMAP) and tryptophan to form 4-dimethylallyl-L-tryptophan. The second step is catalyzed by the methyltransferase ifgB that methylates 4-dimethylallyl-L-tryptophan in the presence of S-adenosyl-L-methionine, resulting in the formation of N-methyl-dimethylallyl-L-tryptophan. The catalase ifgD and the FAD-dependent oxidoreductase ifgC then transform N-methyl-dimethylallyl-L-tryptophan to chanoclavine-I which is further oxidized by ifgE in the presence of NAD(+), resulting in the formation of chanoclavine-I aldehyde. The chanoclavine-I aldehyde reductases ifgG and/or fgaOx3 reduce chanoclavine-I aldehyde to dihydrochanoclavine-I aldehyde that spontaneously dehydrates to form 6,8-dimethyl-6,7-didehydroergoline. The festuclavine dehydrogenases ifgF1 and/or ifgF2 then catalyze the reduction of 6,8-dimethyl-6,7-didehydroergoline to form festuclavine. Hydrolysis of festuclavine by a yet undetermined cytochrome P450 monooxygenase (called ifgH) then leads to the formation of isofumigaclavine B which is in turn acetylated by ifgI to isofumigaclavine A. Penicillium roqueforti has interestingly at least two sets of genes for the consumption of chanoclavine-I aldehyde on three different loci, the OYEs ifgG/fgaOx3 and the festuclavine synthase homologs ifgF1/ifgF2. The reason for the duplication of these genes is unclear, probably to ensure the conversion of chanoclavine-I aldehyde by differential gene expression under various environmental conditions. This Penicillium roqueforti (strain FM164) protein is Chanoclavine-I dehydrogenase ifgE.